We begin with the raw amino-acid sequence, 274 residues long: Ubiquinone biosynthesis protein COQ4 homolog, mitochondrial (274 aa).

A mitochondrion-targeting transit peptide spans 1-20 (MLRQTAFRSMKLNRTPGRYF). Residues 13–40 (NRTPGRYFTTAENMDTGSSQSPPDTEQK) form a disordered region. The segment covering 22-36 (TAENMDTGSSQSPPD) has biased composition (polar residues). Positions 177, 178, 181, and 193 each coordinate Zn(2+).

It belongs to the COQ4 family. As to quaternary structure, component of a multi-subunit COQ enzyme complex. Zn(2+) serves as cofactor.

The protein resides in the mitochondrion inner membrane. The catalysed reaction is a 4-hydroxy-3-methoxy-5-(all-trans-polyprenyl)benzoate + H(+) = a 2-methoxy-6-(all-trans-polyprenyl)phenol + CO2. The protein operates within cofactor biosynthesis; ubiquinone biosynthesis. Functionally, lyase that catalyzes the C1-decarboxylation of 4-hydroxy-3-methoxy-5-(all-trans-polyprenyl)benzoic acid into 2-methoxy-6-(all-trans-polyprenyl)phenol during ubiquinone biosynthesis. In Aedes aegypti (Yellowfever mosquito), this protein is Ubiquinone biosynthesis protein COQ4 homolog, mitochondrial.